The sequence spans 338 residues: NAC domain-containing protein 46 (338 aa).

The region spanning 20-171 (LPPGFRFHPT…EWVVCRVFHK (152 aa)) is the NAC domain. A DNA-binding region spans residues 118-177 (VGMKKTLVFYTGRAPKGEKTNWVMHEYRLDGKYSYHNLPKTARDEWVVCRVFHKNAPSTT).

As to quaternary structure, interacts with RCD1.

Its subcellular location is the nucleus. Functionally, transcriptional activator that acts as a positive regulator of leaf senescence. Activates NYC1, SGR1, SGR2 and PAO, which are genes involved in chlorophyll catabolic processes. Activates senescence-associated genes, such as RNS1, SAG12 and SAG13. This is NAC domain-containing protein 46 from Arabidopsis thaliana (Mouse-ear cress).